The following is a 1006-amino-acid chain: Probable beta-galactosidase A (1006 aa).

An N-terminal signal peptide occupies residues M1–G18. Residues Y96, N140, A141, and E142 each coordinate substrate. N156 carries an N-linked (GlcNAc...) asparagine glycan. Substrate is bound at residue N199. The active-site Proton donor is E200. C205 and C206 form a disulfide bridge. N207 carries an N-linked (GlcNAc...) asparagine glycan. Y260 is a substrate binding site. C266 and C315 are joined by a disulfide. Residue E298 is the Nucleophile of the active site. Y364 is a substrate binding site. N-linked (GlcNAc...) asparagine glycans are attached at residues N373, N402, N422, N622, N777, and N914.

The protein belongs to the glycosyl hydrolase 35 family.

The protein resides in the secreted. It carries out the reaction Hydrolysis of terminal non-reducing beta-D-galactose residues in beta-D-galactosides.. Cleaves beta-linked terminal galactosyl residues from gangliosides, glycoproteins, and glycosaminoglycans. This Neosartorya fischeri (strain ATCC 1020 / DSM 3700 / CBS 544.65 / FGSC A1164 / JCM 1740 / NRRL 181 / WB 181) (Aspergillus fischerianus) protein is Probable beta-galactosidase A (lacA).